Reading from the N-terminus, the 84-residue chain is Large ribosomal subunit protein bL31 (84 aa).

Zn(2+)-binding residues include cysteine 16, cysteine 18, cysteine 38, and cysteine 41.

Belongs to the bacterial ribosomal protein bL31 family. Type A subfamily. As to quaternary structure, part of the 50S ribosomal subunit. It depends on Zn(2+) as a cofactor.

Its function is as follows. Binds the 23S rRNA. The protein is Large ribosomal subunit protein bL31 of Mycobacterium leprae (strain Br4923).